Consider the following 89-residue polypeptide: Small ribosomal subunit protein uS15 (89 aa).

The protein belongs to the universal ribosomal protein uS15 family. In terms of assembly, part of the 30S ribosomal subunit. Forms a bridge to the 50S subunit in the 70S ribosome, contacting the 23S rRNA.

One of the primary rRNA binding proteins, it binds directly to 16S rRNA where it helps nucleate assembly of the platform of the 30S subunit by binding and bridging several RNA helices of the 16S rRNA. Functionally, forms an intersubunit bridge (bridge B4) with the 23S rRNA of the 50S subunit in the ribosome. This chain is Small ribosomal subunit protein uS15, found in Photobacterium profundum (strain SS9).